Consider the following 22-residue polypeptide: 2.39 kDa venom peptide (22 aa).

Contains 2 disulfide bonds. As to expression, expressed by the venom gland.

Its subcellular location is the secreted. Functionally, not lethal to mice by intraperitoneal or intracerebroventricular injections in doses up to 100 micrograms. The polypeptide is 2.39 kDa venom peptide (Heterometrus spinifer (Asia giant forest scorpion)).